We begin with the raw amino-acid sequence, 424 residues long: Glycerol-3-phosphate dehydrogenase [NAD(+)] (424 aa).

Residues 79–84 (GSGNWG), Phe-111, and Phe-167 contribute to the NAD(+) site. Residue Lys-190 participates in substrate binding. Ala-223 contacts NAD(+). The active-site Proton acceptor is Lys-283. Positions 348 and 377 each coordinate NAD(+). Position 348–349 (348–349 (RN)) interacts with substrate.

Belongs to the NAD-dependent glycerol-3-phosphate dehydrogenase family.

The enzyme catalyses sn-glycerol 3-phosphate + NAD(+) = dihydroxyacetone phosphate + NADH + H(+). The protein is Glycerol-3-phosphate dehydrogenase [NAD(+)] (GPD) of Eremothecium gossypii (strain ATCC 10895 / CBS 109.51 / FGSC 9923 / NRRL Y-1056) (Yeast).